We begin with the raw amino-acid sequence, 1305 residues long: Contactin-associated protein like 5-1 (1305 aa).

A signal peptide spans 1–24; that stretch reads MDSLQRLNGLLTLVLSALWHLGLT. One can recognise an F5/8 type C domain in the interval 25–174; the sequence is ASNYNCDDPL…IGMRVEAYGC (150 aa). Laminin G-like domains follow at residues 180-360 and 367-544; these read VADF…TFSC and PITF…IDLC. N282 carries N-linked (GlcNAc...) asparagine glycosylation. An intrachain disulfide couples C329 to C360. N-linked (GlcNAc...) asparagine glycosylation is present at N496. Disulfide bonds link C512–C544, C550–C561, and C555–C570. The EGF-like 1 domain occupies 546–583; the sequence is IKDRCLPNYCEHGGHCAQTWTTFYCNCSDTGYTGATCH. N-linked (GlcNAc...) asparagine glycosylation is present at N571. A disulfide bridge links C572 with C582. The Fibrinogen C-terminal domain maps to 584–790; that stretch reads DSIYEQSCEV…LRCNGDRHFW (207 aa). N622 carries an N-linked (GlcNAc...) asparagine glycan. In terms of domain architecture, Laminin G-like 3 spans 791–956; it reads NAVSFSTEAS…KLMSGVTPGC (166 aa). Intrachain disulfides connect C929-C956, C960-C973, C967-C982, and C984-C994. Residues 957 to 995 enclose the EGF-like 2 domain; the sequence is PGHCSSYSSNCHNGGKCVEKQSGYSCDCTNSPNEGPFCQ. Residues 1014-1198 enclose the Laminin G-like 4 domain; it reads EPYLVIKNTS…VHGTLTESGC (185 aa). N1057 carries N-linked (GlcNAc...) asparagine glycosylation. C1163 and C1198 are disulfide-bonded. A helical membrane pass occupies residues 1238-1258; the sequence is VIGGIIAVVTFVTFCVIGIMI.

This sequence belongs to the neurexin family.

The protein resides in the membrane. Its function is as follows. May play a role in the correct development and proper functioning of the peripheral and central nervous system and be involved in cell adhesion and intercellular communication. In Rattus norvegicus (Rat), this protein is Contactin-associated protein like 5-1 (Cntnap5a).